The chain runs to 213 residues: Probable nicotinate-nucleotide adenylyltransferase (213 aa).

This sequence belongs to the NadD family.

The enzyme catalyses nicotinate beta-D-ribonucleotide + ATP + H(+) = deamido-NAD(+) + diphosphate. It participates in cofactor biosynthesis; NAD(+) biosynthesis; deamido-NAD(+) from nicotinate D-ribonucleotide: step 1/1. Catalyzes the reversible adenylation of nicotinate mononucleotide (NaMN) to nicotinic acid adenine dinucleotide (NaAD). This chain is Probable nicotinate-nucleotide adenylyltransferase, found in Shigella boydii serotype 4 (strain Sb227).